The sequence spans 3133 residues: Hemocytin (3133 aa).

One can recognise a TIL 1 domain in the interval 40–96; it reads CTGGQQYTVCADSCLRKCSDTALAASGQCKPVCVEGCACSPSQLLDDNGVCVPVAKC. Residue N151 is glycosylated (N-linked (GlcNAc...) asparagine). The 57-residue stretch at 153–209 folds into the TIL 2 domain; the sequence is TAQNMEFTTCETSEPLTCKNMHLPPSTQTAECRPGCQCKKGQVLDTASKRCVPATQC. N-linked (GlcNAc...) asparagine glycosylation occurs at N237. In terms of domain architecture, VWFD 1 spans 247–418; the sequence is GVCGAWGDSH…DSWKLKPTCP (172 aa). 3 disulfides stabilise this stretch: C249-C380, C271-C417, and C295-C302. Residues 509–576 form the TIL 3 domain; sequence CDEVCSNYDS…TTECVPRAKC (68 aa). An N-linked (GlcNAc...) asparagine glycan is attached at N564. The tract at residues 661–680 is disordered; it reads PDGQSVESEPLPKPNELQIG. Positions 770 to 837 constitute a TIL 4 domain; it reads CPPGEVYQAC…ERTCVPVKDC (68 aa). Positions 899–924 are disordered; the sequence is STTTTTTTSTTTTTTTPEPTETTTET. 2 cysteine pairs are disulfide-bonded: C940/C1095 and C1116/C1254. F5/8 type C domains are found at residues 940 to 1095 and 1116 to 1254; these read CSPD…IIGC and CTEP…PIGC. N-linked (GlcNAc...) asparagine glycosylation is found at N1170, N1387, N1622, N1727, and N1847. The 176-residue stretch at 1619 to 1794 folds into the VWFD 2 domain; it reads VFCNMTGRTF…KPGVPADACA (176 aa). 2 cysteine pairs are disulfide-bonded: C1621–C1754 and C1641–C1793. Residues 1890–1948 enclose the TIL 5 domain; that stretch reads CPPPLVHYDCYRKRCEETCAPYPNAARACPAQEGQCSPGCYCPDGKLRKGDQCVLPADC. The VWFD 3 domain maps to 1951–2136; the sequence is CTCTGVGTPA…WQASPEKLTE (186 aa). Disulfide bonds link C1953–C2099 and C2001–C2009. Residues N1975 and N1985 are each glycosylated (N-linked (GlcNAc...) asparagine). Residues N2093, N2113, N2161, N2276, and N2451 are each glycosylated (N-linked (GlcNAc...) asparagine). Residues 2229–2285 form the TIL 6 domain; it reads CEEPFVYRACVDCERTCDNYEQLQTSPEKCTNKPVEGCFCPEGKVRVNNTCIEPGKC. The region spanning 2553-2622 is the VWFC 1 domain; that stretch reads VACRHQDNVY…DSGQCCGKCE (70 aa). N-linked (GlcNAc...) asparagine glycosylation is found at N2647, N2654, N2663, N2794, N2810, N2865, N2929, N2964, and N3028. Positions 2842–2907 constitute a VWFC 2 domain; the sequence is VACRDGDKIY…AADHCCGRCV (66 aa). 4 cysteine pairs are disulfide-bonded: C2971–C3040, C2991–C3054, C3004–C3070, and C3020–C3072. Residues 2971-3076 enclose the CTCK domain; that stretch reads CNEKPQALSK…PARCHCAACG (106 aa).

Post-translationally, may be converted into the 260 kDa mature hemocytin by proteolysis.

Adhesive protein and relates to hemostasis or encapsulation of foreign substances for self-defense. In Bombyx mori (Silk moth), this protein is Hemocytin.